The sequence spans 487 residues: Aspartyl/glutamyl-tRNA(Asn/Gln) amidotransferase subunit B (487 aa).

This sequence belongs to the GatB/GatE family. GatB subfamily. As to quaternary structure, heterotrimer of A, B and C subunits.

The enzyme catalyses L-glutamyl-tRNA(Gln) + L-glutamine + ATP + H2O = L-glutaminyl-tRNA(Gln) + L-glutamate + ADP + phosphate + H(+). It carries out the reaction L-aspartyl-tRNA(Asn) + L-glutamine + ATP + H2O = L-asparaginyl-tRNA(Asn) + L-glutamate + ADP + phosphate + 2 H(+). In terms of biological role, allows the formation of correctly charged Asn-tRNA(Asn) or Gln-tRNA(Gln) through the transamidation of misacylated Asp-tRNA(Asn) or Glu-tRNA(Gln) in organisms which lack either or both of asparaginyl-tRNA or glutaminyl-tRNA synthetases. The reaction takes place in the presence of glutamine and ATP through an activated phospho-Asp-tRNA(Asn) or phospho-Glu-tRNA(Gln). In Chlamydia caviae (strain ATCC VR-813 / DSM 19441 / 03DC25 / GPIC) (Chlamydophila caviae), this protein is Aspartyl/glutamyl-tRNA(Asn/Gln) amidotransferase subunit B.